The chain runs to 531 residues: Probable inactive beta-glucosidase 25 (531 aa).

The signal sequence occupies residues 1-24; it reads MALKAILFLGLFLVVIVSPITVYG. Residues Gln-53 and 202-203 each bind a beta-D-glucoside; that span reads NE. The active-site Proton donor is Glu-203. A disulfide bridge links Cys-222 with Cys-230. Residues Phe-348 and 477–478 each bind a beta-D-glucoside; that span reads EW.

It belongs to the glycosyl hydrolase 1 family.

This Arabidopsis thaliana (Mouse-ear cress) protein is Probable inactive beta-glucosidase 25.